The chain runs to 744 residues: 3-isopropylmalate dehydratase (744 aa).

Positions 341, 401, and 404 each coordinate [4Fe-4S] cluster.

This sequence belongs to the aconitase/IPM isomerase family. Monomer. Requires [4Fe-4S] cluster as cofactor.

It carries out the reaction (2R,3S)-3-isopropylmalate = (2S)-2-isopropylmalate. It functions in the pathway amino-acid biosynthesis; L-leucine biosynthesis; L-leucine from 3-methyl-2-oxobutanoate: step 2/4. Functionally, catalyzes the isomerization between 2-isopropylmalate and 3-isopropylmalate, via the formation of 2-isopropylmaleate. The sequence is that of 3-isopropylmalate dehydratase (leu1) from Phycomyces blakesleeanus (strain ATCC 8743b / DSM 1359 / FGSC 10004 / NBRC 33097 / NRRL 1555).